Here is a 491-residue protein sequence, read N- to C-terminus: Cytosolic Fe-S cluster assembly factor NAR1 (491 aa).

[4Fe-4S] cluster-binding residues include Cys20, Cys59, Cys62, Cys65, Cys177, Cys231, Cys412, and Cys416.

The protein belongs to the NARF family. Interacts with CIA1.

Component of the cytosolic Fe/S protein assembly machinery. Required for maturation of extramitochondrial Fe/S proteins. May play a role in the transfer of pre-assembled Fe/S clusters to target apoproteins. In Saccharomyces cerevisiae (strain YJM789) (Baker's yeast), this protein is Cytosolic Fe-S cluster assembly factor NAR1 (NAR1).